Consider the following 524-residue polypeptide: RNA-directed RNA polymerase (524 aa).

In terms of domain architecture, RdRp catalytic spans 220 to 340 (QSIAQIDFSS…NFETALCRQE (121 aa)).

The enzyme catalyses RNA(n) + a ribonucleoside 5'-triphosphate = RNA(n+1) + diphosphate. Functionally, RNA-dependent RNA polymerase which replicates the viral genome. The sequence is that of RNA-directed RNA polymerase from Cryptosporidium parvum.